Reading from the N-terminus, the 277-residue chain is Release factor glutamine methyltransferase (277 aa).

S-adenosyl-L-methionine-binding positions include 117–121, D140, W168, and N183; that span reads GTGTG. 183 to 186 lines the substrate pocket; it reads NPPY.

It belongs to the protein N5-glutamine methyltransferase family. PrmC subfamily.

It carries out the reaction L-glutaminyl-[peptide chain release factor] + S-adenosyl-L-methionine = N(5)-methyl-L-glutaminyl-[peptide chain release factor] + S-adenosyl-L-homocysteine + H(+). Methylates the class 1 translation termination release factors RF1/PrfA and RF2/PrfB on the glutamine residue of the universally conserved GGQ motif. The polypeptide is Release factor glutamine methyltransferase (Shigella dysenteriae serotype 1 (strain Sd197)).